Consider the following 406-residue polypeptide: S-adenosylmethionine synthase (406 aa).

ATP is bound at residue histidine 16. Aspartate 18 is a binding site for Mg(2+). Glutamate 44 provides a ligand contact to K(+). L-methionine contacts are provided by glutamate 57 and glutamine 109. Positions 109 to 119 (QSPQIAQGVDE) are flexible loop. ATP contacts are provided by residues 174–176 (DAK), 249–250 (RF), aspartate 258, 264–265 (RK), alanine 281, and lysine 285. Aspartate 258 contributes to the L-methionine binding site. Lysine 289 provides a ligand contact to L-methionine.

It belongs to the AdoMet synthase family. As to quaternary structure, homotetramer; dimer of dimers. Requires Mg(2+) as cofactor. It depends on K(+) as a cofactor.

The protein resides in the cytoplasm. It catalyses the reaction L-methionine + ATP + H2O = S-adenosyl-L-methionine + phosphate + diphosphate. It participates in amino-acid biosynthesis; S-adenosyl-L-methionine biosynthesis; S-adenosyl-L-methionine from L-methionine: step 1/1. In terms of biological role, catalyzes the formation of S-adenosylmethionine (AdoMet) from methionine and ATP. The overall synthetic reaction is composed of two sequential steps, AdoMet formation and the subsequent tripolyphosphate hydrolysis which occurs prior to release of AdoMet from the enzyme. The sequence is that of S-adenosylmethionine synthase from Sphingopyxis alaskensis (strain DSM 13593 / LMG 18877 / RB2256) (Sphingomonas alaskensis).